The primary structure comprises 318 residues: Putative 2-hydroxyacid dehydrogenase SSP0606 (318 aa).

Residues 156–157 (EI), 235–237 (ASR), and Asp261 each bind NAD(+). Arg237 is a catalytic residue. The active site involves Glu266. His284 acts as the Proton donor in catalysis. 284–287 (HIGN) lines the NAD(+) pocket.

This sequence belongs to the D-isomer specific 2-hydroxyacid dehydrogenase family.

The protein is Putative 2-hydroxyacid dehydrogenase SSP0606 of Staphylococcus saprophyticus subsp. saprophyticus (strain ATCC 15305 / DSM 20229 / NCIMB 8711 / NCTC 7292 / S-41).